A 308-amino-acid polypeptide reads, in one-letter code: MGNTLGLAPMGTLPRWSHRREEPLPNPGSFDELHRLCKDVFPAQMEGVKLVVNKVLSSHFQVAHTVHMSALGLPGYHLHTAYAGDWQLSPTEVFPTVVGDMDSSGSLNAQVLLLLAERLRAKAVFQTQQAKFLTWQFDGEYRGDDYTATLTLGNPDLIGESVIMVAHFLQSITHRLVLGGELVYHRRPGEEGAILTLAGKYSALHWVATLNVGSGGAHASYYHKANEQVQVGVEFEANTRLQDTTFSFGYHLTLPQADMVFRGLVDSNWCVGAVLEKKMRPLPVTLALGAFLNHWRNRFHCGFSITVG.

Positions 281–308 (PLPVTLALGAFLNHWRNRFHCGFSITVG) are required for mitochondrial targeting.

This sequence belongs to the Tom40 family. In terms of assembly, forms part of the preprotein translocase of the outer mitochondrial membrane (TOM complex) containing TOMM22, TOMM40, TOMM40L and TOMM70. Interacts with mitochondrial targeting sequences. As to expression, widely expressed. Higher levels in heart, brain and liver, very low level in testis.

The protein resides in the mitochondrion outer membrane. Its function is as follows. Potential channel-forming protein implicated in import of protein precursors into mitochondria. The polypeptide is Mitochondrial import receptor subunit TOM40B (Rattus norvegicus (Rat)).